The sequence spans 185 residues: Large ribosomal subunit protein uL22 (185 aa).

The disordered stretch occupies residues 157 to 185 (VAAPTPDEDAPKKKQSKKKMARQKLMQRD). The segment covering 169-178 (KKQSKKKMAR) has biased composition (basic residues).

This sequence belongs to the universal ribosomal protein uL22 family.

The chain is Large ribosomal subunit protein uL22 (RpL17) from Argas monolakensis (Mono lake bird tick).